Consider the following 230-residue polypeptide: Leucyl/phenylalanyl-tRNA--protein transferase (230 aa).

It belongs to the L/F-transferase family.

The protein resides in the cytoplasm. The enzyme catalyses N-terminal L-lysyl-[protein] + L-leucyl-tRNA(Leu) = N-terminal L-leucyl-L-lysyl-[protein] + tRNA(Leu) + H(+). The catalysed reaction is N-terminal L-arginyl-[protein] + L-leucyl-tRNA(Leu) = N-terminal L-leucyl-L-arginyl-[protein] + tRNA(Leu) + H(+). It carries out the reaction L-phenylalanyl-tRNA(Phe) + an N-terminal L-alpha-aminoacyl-[protein] = an N-terminal L-phenylalanyl-L-alpha-aminoacyl-[protein] + tRNA(Phe). In terms of biological role, functions in the N-end rule pathway of protein degradation where it conjugates Leu, Phe and, less efficiently, Met from aminoacyl-tRNAs to the N-termini of proteins containing an N-terminal arginine or lysine. The protein is Leucyl/phenylalanyl-tRNA--protein transferase of Syntrophotalea carbinolica (strain DSM 2380 / NBRC 103641 / GraBd1) (Pelobacter carbinolicus).